We begin with the raw amino-acid sequence, 290 residues long: HTH-type transcriptional regulator BsdA (290 aa).

Residues 1-59 (MDIRQLRYFITIAQEQKITSAAKKLHMAQPPLSRQLKQLEDELGVVLFDRNKKKQMTLT) enclose the HTH lysR-type domain. Residues 18-37 (ITSAAKKLHMAQPPLSRQLK) constitute a DNA-binding region (H-T-H motif).

The protein belongs to the LysR transcriptional regulatory family.

Its function is as follows. Could be a positive regulator of bsdBCD expression in response to salicylic acid. The protein is HTH-type transcriptional regulator BsdA (bsdA) of Bacillus subtilis (strain 168).